We begin with the raw amino-acid sequence, 678 residues long: Catalase (678 aa).

Positions 1-26 (MSNEREMQNKKDQQLESFRVEDEGKK) are enriched in basic and acidic residues. The tract at residues 1–32 (MSNEREMQNKKDQQLESFRVEDEGKKLTTNQG) is disordered. Residues His75 and Asn148 contribute to the active site. Tyr362 serves as a coordination point for heme.

It belongs to the catalase family. HPII subfamily. Heme serves as cofactor.

Its subcellular location is the cytoplasm. It catalyses the reaction 2 H2O2 = O2 + 2 H2O. Its function is as follows. Decomposes hydrogen peroxide into water and oxygen; serves to protect cells from the toxic effects of hydrogen peroxide. The sequence is that of Catalase (katE) from Alkalihalophilus pseudofirmus (strain ATCC BAA-2126 / JCM 17055 / OF4) (Bacillus pseudofirmus).